Reading from the N-terminus, the 198-residue chain is MSRYTGSTWKISRRLNYSITETGKELRKRAYAPGQHGQRRAKISDYGLQLKEKQKLRFTYGMSEKQFRKTFERASKLKGIHGEMFLVLLESRLDNIVYRLGFAKTRAQARQLVNHGHVLVEGKKVDIASYSLKPGQTITLREKSKNLKIVEEVLKNKFVRADYVSLDKQLNGKYVRYPKRNEFLAEINEQLIVEFYNR.

In terms of domain architecture, S4 RNA-binding spans 91 to 151; the sequence is SRLDNIVYRL…EKSKNLKIVE (61 aa).

Belongs to the universal ribosomal protein uS4 family. In terms of assembly, part of the 30S ribosomal subunit. Contacts protein S5. The interaction surface between S4 and S5 is involved in control of translational fidelity.

Its function is as follows. One of the primary rRNA binding proteins, it binds directly to 16S rRNA where it nucleates assembly of the body of the 30S subunit. Functionally, with S5 and S12 plays an important role in translational accuracy. This chain is Small ribosomal subunit protein uS4, found in Phytoplasma australiense.